Here is a 302-residue protein sequence, read N- to C-terminus: Ribostamycin:4-(gamma-L-glutamylamino)-(S)-2-hydroxybutanoyl-[BtrI acyl-carrier protein] 4-(gamma-L-glutamylamino)-(S)-2-hydroxybutanoate transferase (302 aa).

It catalyses the reaction 4-(gamma-L-glutamylamino)-(2S)-2-hydroxybutanoyl-[BtrI ACP] + ribostamycin = gamma-L-glutamyl-butirosin B + holo-[BtrI ACP] + H(+). It functions in the pathway antibiotic biosynthesis; butirosin biosynthesis. Aminoglycoside acyltransferase that attaches the (S)-4-amino-2-hydroxybutyrate (AHBA) side chain from the acyl carrier protein BtrI to the aminoglycoside ribostamycin in the biosynthetic pathway of butirosin. The AHBA side chain protects the antibiotic from several common resistance mechanisms. This is Ribostamycin:4-(gamma-L-glutamylamino)-(S)-2-hydroxybutanoyl-[BtrI acyl-carrier protein] 4-(gamma-L-glutamylamino)-(S)-2-hydroxybutanoate transferase (btrH) from Niallia circulans (Bacillus circulans).